The chain runs to 193 residues: Ion-translocating oxidoreductase complex subunit A (193 aa).

6 helical membrane passes run 5-25 (ILLIISTALINNFVLVKFLGL), 39-59 (IGMGMATTFVLTVASLSAYLV), 65-85 (IPLEAQFLRTLVFILVIAVIV), 102-122 (LLGIYLPLITTNCAVLGVALL), 134-154 (VLYGFGAALGFSLVLVLFAAL), and 171-191 (SIALITAGLMSLAFMGFTGLV).

It belongs to the NqrDE/RnfAE family. As to quaternary structure, the complex is composed of six subunits: RnfA, RnfB, RnfC, RnfD, RnfE and RnfG.

The protein localises to the cell inner membrane. Part of a membrane-bound complex that couples electron transfer with translocation of ions across the membrane. The protein is Ion-translocating oxidoreductase complex subunit A of Actinobacillus pleuropneumoniae serotype 5b (strain L20).